Here is a 257-residue protein sequence, read N- to C-terminus: Zinc transporter ZupT (257 aa).

8 consecutive transmembrane segments (helical) span residues 5-25 (LILTLLAGAATFIGAFLGVLG), 32-52 (VLAFSLGFAAGIMLLISLMEM), 61-81 (GMSPVLGYGMFIIGLLGYFGL), 109-129 (AILLTLGISLHNFPEGIATFV), 137-157 (LGFGIALAVALHNIPEGLAVA), 171-191 (IFWAGISGMAEILGGVLAWLI), 195-215 (LVSPIVMAAIMAAVAGIMVAL), and 236-256 (GVLCGMSIMGLSLVILQTIGI). Fe(2+) contacts are provided by Asn-120 and Glu-123. Glu-123 and His-148 together coordinate Zn(2+). Fe(2+)-binding residues include Asn-149, Glu-152, and Glu-181. Glu-152 contacts Zn(2+).

This sequence belongs to the ZIP transporter (TC 2.A.5) family. ZupT subfamily.

It is found in the cell inner membrane. It catalyses the reaction Zn(2+)(in) = Zn(2+)(out). Its function is as follows. Mediates zinc uptake. May also transport other divalent cations. The polypeptide is Zinc transporter ZupT (Salmonella heidelberg (strain SL476)).